The following is a 155-amino-acid chain: V-type proton ATPase 16 kDa proteolipid subunit c (155 aa).

Topologically, residues 1-10 (MSEAKNGPEY) are lumenal. Residues 11–33 (ASFFAVMGASAAMVFSALGAAYG) form a helical membrane-spanning segment. At 34–55 (TAKSGTGIAAMSVMRPEMIMKS) the chain is on the cytoplasmic side. A helical membrane pass occupies residues 56-76 (IIPVVMAGIIAIYGLVVAVLI). At 77 to 92 (ANSLNDGISLYRSFLQ) the chain is on the lumenal side. Residues 93–114 (LGAGLSVGLSGLAAGFAIGIVG) form a helical membrane-spanning segment. Topologically, residues 115–131 (DAGVRGTAQQPRLFVGM) are cytoplasmic. Residues 132–152 (ILILIFAEVLGLYGLIVALIL) form a helical membrane-spanning segment. The Lumenal portion of the chain corresponds to 153–155 (STK).

Belongs to the V-ATPase proteolipid subunit family. In terms of assembly, V-ATPase is a heteromultimeric enzyme made up of two complexes: the ATP-hydrolytic V1 complex and the proton translocation V0 complex. The V1 complex consists of three catalytic AB heterodimers that form a heterohexamer, three peripheral stalks each consisting of EG heterodimers, one central rotor including subunits D and F, and the regulatory subunits C and H. The proton translocation complex V0 consists of the proton transport subunit a, a ring of proteolipid subunits c9c'', rotary subunit d, subunits e and f, and the accessory subunits ATP6AP1/Ac45 and ATP6AP2/PRR. Interacts with the V0 complex V-ATPase subunit a4 ATP6V0A4. Interacts with LASS2. Interacts with RNF182; this interaction leads to ubiquitination and degradation via the proteasome pathway. Post-translationally, ubiquitinated by RNF182, leading to its degradation via the ubiquitin-proteasome pathway. In terms of tissue distribution, expressed in brain (at protein level).

The protein resides in the cytoplasmic vesicle. Its subcellular location is the clathrin-coated vesicle membrane. It localises to the secretory vesicle. The protein localises to the synaptic vesicle membrane. Proton-conducting pore forming subunit of the V0 complex of vacuolar(H+)-ATPase (V-ATPase), a multisubunit enzyme composed of a peripheral complex (V1) that hydrolyzes ATP and a membrane integral complex (V0) that translocates protons. V-ATPase is responsible for acidifying and maintaining the pH of intracellular compartments and in some cell types, is targeted to the plasma membrane, where it is responsible for acidifying the extracellular environment. This Bos taurus (Bovine) protein is V-type proton ATPase 16 kDa proteolipid subunit c (ATP6V0C).